Here is a 260-residue protein sequence, read N- to C-terminus: uncharacterized protein (260 aa).

Helical transmembrane passes span 39–59 (IFYL…LIEA), 68–88 (IIVG…SFLI), 111–131 (FLGS…FFLG), 159–179 (LIFS…LFKI), 193–213 (FIYL…ILSQ), and 214–234 (FILV…IKLI).

This sequence belongs to the TatC family.

The protein resides in the mitochondrion membrane. This is an uncharacterized protein from Reclinomonas americana.